The following is a 391-amino-acid chain: Ethanol acetyltransferase 1 (391 aa).

A mitochondrion-targeting transit peptide spans 1–24 (MFFTKVLNNQVANGLKQLPVHKRV). Residues 48 to 154 (PIVFVHGIFG…DNSPIEQPHI (107 aa)) enclose the AB hydrolase-1 domain. Catalysis depends on charge relay system residues Ser-121, Asp-145, and His-295.

This sequence belongs to the AB hydrolase superfamily.

It localises to the mitochondrion. The enzyme catalyses ethanol + acetyl-CoA = ethyl acetate + CoA. It carries out the reaction acetyl-CoA + H2O = acetate + CoA + H(+). The catalysed reaction is ethyl acetate + H2O = ethanol + acetate + H(+). Its activity is regulated as follows. By ethanol. Thioesterase and esterase reactions are highly repressed in the presence of high ethanol concentrations. In terms of biological role, alcohol acetyltransferase that catalyzes the synthesis of ethyl acetate from ethanol and acetyl-CoA. Can also function as a thioesterase by hydrolyzing acetyl-CoA in the absence of ethanol, as well as esterase hydrolyzing ethyl acetate. This Wickerhamomyces anomalus (strain ATCC 58044 / CBS 1984 / NCYC 433 / NRRL Y-366-8) (Yeast) protein is Ethanol acetyltransferase 1 (EAT1).